A 719-amino-acid polypeptide reads, in one-letter code: Phosphoribosylformylglycinamidine synthase subunit PurL (719 aa).

The active site involves His45. Tyr48 and Lys87 together coordinate ATP. Glu89 lines the Mg(2+) pocket. Substrate is bound by residues 90 to 93 (SHNH) and Arg112. Catalysis depends on His91, which acts as the Proton acceptor. Asp113 serves as a coordination point for Mg(2+). A substrate-binding site is contributed by Gln236. Asp264 contacts Mg(2+). 308–310 (ESQ) lines the substrate pocket. Residues Asn493 and Gly530 each contribute to the ATP site. Asn531 provides a ligand contact to Mg(2+). Ser533 contacts substrate.

It belongs to the FGAMS family. Monomer. Part of the FGAM synthase complex composed of 1 PurL, 1 PurQ and 2 PurS subunits.

The protein localises to the cytoplasm. The catalysed reaction is N(2)-formyl-N(1)-(5-phospho-beta-D-ribosyl)glycinamide + L-glutamine + ATP + H2O = 2-formamido-N(1)-(5-O-phospho-beta-D-ribosyl)acetamidine + L-glutamate + ADP + phosphate + H(+). The protein operates within purine metabolism; IMP biosynthesis via de novo pathway; 5-amino-1-(5-phospho-D-ribosyl)imidazole from N(2)-formyl-N(1)-(5-phospho-D-ribosyl)glycinamide: step 1/2. Its function is as follows. Part of the phosphoribosylformylglycinamidine synthase complex involved in the purines biosynthetic pathway. Catalyzes the ATP-dependent conversion of formylglycinamide ribonucleotide (FGAR) and glutamine to yield formylglycinamidine ribonucleotide (FGAM) and glutamate. The FGAM synthase complex is composed of three subunits. PurQ produces an ammonia molecule by converting glutamine to glutamate. PurL transfers the ammonia molecule to FGAR to form FGAM in an ATP-dependent manner. PurS interacts with PurQ and PurL and is thought to assist in the transfer of the ammonia molecule from PurQ to PurL. In Novosphingobium aromaticivorans (strain ATCC 700278 / DSM 12444 / CCUG 56034 / CIP 105152 / NBRC 16084 / F199), this protein is Phosphoribosylformylglycinamidine synthase subunit PurL.